The chain runs to 542 residues: Ribulokinase 2 (542 aa).

Belongs to the ribulokinase family.

It carries out the reaction D-ribulose + ATP = D-ribulose 5-phosphate + ADP + H(+). It catalyses the reaction L-ribulose + ATP = L-ribulose 5-phosphate + ADP + H(+). It participates in carbohydrate degradation; L-arabinose degradation via L-ribulose; D-xylulose 5-phosphate from L-arabinose (bacterial route): step 2/3. This Staphylococcus saprophyticus subsp. saprophyticus (strain ATCC 15305 / DSM 20229 / NCIMB 8711 / NCTC 7292 / S-41) protein is Ribulokinase 2.